An 84-amino-acid chain; its full sequence is Sulfur carrier protein TusA (84 aa).

C19 acts as the Cysteine persulfide intermediate in catalysis.

The protein belongs to the sulfur carrier protein TusA family. Interacts with IscS.

It localises to the cytoplasm. The protein operates within tRNA modification. Its function is as follows. Sulfur carrier protein involved in sulfur trafficking in the cell. Part of a sulfur-relay system required for 2-thiolation during synthesis of 2-thiouridine of the modified wobble base 5-methylaminomethyl-2-thiouridine (mnm(5)s(2)U) in tRNA. Interacts with IscS and stimulates its cysteine desulfurase activity. Accepts an activated sulfur from IscS, which is then transferred to TusD, and thus determines the direction of sulfur flow from IscS to 2-thiouridine formation. Also appears to be involved in sulfur transfer for the biosynthesis of molybdopterin. This is Sulfur carrier protein TusA from Photorhabdus laumondii subsp. laumondii (strain DSM 15139 / CIP 105565 / TT01) (Photorhabdus luminescens subsp. laumondii).